A 601-amino-acid polypeptide reads, in one-letter code: UvrABC system protein C (601 aa).

Residues 15 to 94 enclose the GIY-YIG domain; it reads LQPGVYLFKN…IKSYKPRYNI (80 aa). The region spanning 202–237 is the UVR domain; it reads QEIVREKEKEMAMAARSLEFEKAARLRDQIQSLRQL.

The protein belongs to the UvrC family. In terms of assembly, interacts with UvrB in an incision complex.

The protein resides in the cytoplasm. Functionally, the UvrABC repair system catalyzes the recognition and processing of DNA lesions. UvrC both incises the 5' and 3' sides of the lesion. The N-terminal half is responsible for the 3' incision and the C-terminal half is responsible for the 5' incision. The polypeptide is UvrABC system protein C (Syntrophomonas wolfei subsp. wolfei (strain DSM 2245B / Goettingen)).